Consider the following 479-residue polypeptide: Probable acyl-CoA desaturase (479 aa).

Residues Met1 to Thr18 show a composition bias toward low complexity. Positions Met1–Thr28 are disordered. Residues Met1–His61 are Cytoplasmic-facing. Residues Leu62–Phe82 traverse the membrane as a helical segment. Topologically, residues Thr83 to Lys89 are lumenal. A helical membrane pass occupies residues Thr90–His110. Fe cation contacts are provided by His110, His115, His147, His150, and His151. Residues His110 to His115 carry the Histidine box-1 motif. Over Arg111–His204 the chain is Cytoplasmic. A Histidine box-2 motif is present at residues His147 to His151. The chain crosses the membrane as a helical span at residues Phe205 to Trp225. At Gly226 to Arg229 the chain is on the lumenal side. A helical membrane pass occupies residues Gly230 to Val250. The Cytoplasmic segment spans residues Asn251–Asn479. Residues His255, His284, His287, and His288 each contribute to the Fe cation site. The short motif at His284–His288 is the Histidine box-3 element. One can recognise a Cytochrome b5 heme-binding domain in the interval Gln357–Arg433. His390 and His416 together coordinate heme.

This sequence belongs to the fatty acid desaturase type 1 family. Requires Fe(2+) as cofactor.

Its subcellular location is the membrane. The enzyme catalyses octadecanoyl-CoA + 2 Fe(II)-[cytochrome b5] + O2 + 2 H(+) = (9Z)-octadecenoyl-CoA + 2 Fe(III)-[cytochrome b5] + 2 H2O. Stearoyl-CoA desaturase that utilizes O(2) and electrons from reduced cytochrome b5 to introduce the first double bond into saturated fatty acyl-CoA substrates. Catalyzes the insertion of a cis double bond at the delta-9 position into fatty acyl-CoA substrates including palmitoyl-CoA and stearoyl-CoA. Contributes to the biosynthesis of membrane phospholipids, cholesterol esters and triglycerides. The chain is Probable acyl-CoA desaturase from Schizosaccharomyces pombe (strain 972 / ATCC 24843) (Fission yeast).